The following is a 401-amino-acid chain: Nicotinate phosphoribosyltransferase (401 aa).

Histidine 224 carries the phosphohistidine; by autocatalysis modification.

Belongs to the NAPRTase family. Transiently phosphorylated on a His residue during the reaction cycle. Phosphorylation strongly increases the affinity for substrates and increases the rate of nicotinate D-ribonucleotide production. Dephosphorylation regenerates the low-affinity form of the enzyme, leading to product release.

The catalysed reaction is nicotinate + 5-phospho-alpha-D-ribose 1-diphosphate + ATP + H2O = nicotinate beta-D-ribonucleotide + ADP + phosphate + diphosphate. Its pathway is cofactor biosynthesis; NAD(+) biosynthesis; nicotinate D-ribonucleotide from nicotinate: step 1/1. Catalyzes the synthesis of beta-nicotinate D-ribonucleotide from nicotinate and 5-phospho-D-ribose 1-phosphate at the expense of ATP. The chain is Nicotinate phosphoribosyltransferase from Pseudomonas putida (strain ATCC 700007 / DSM 6899 / JCM 31910 / BCRC 17059 / LMG 24140 / F1).